A 239-amino-acid chain; its full sequence is Probable 2-phosphosulfolactate phosphatase (239 aa).

Belongs to the ComB family. Mg(2+) is required as a cofactor.

The catalysed reaction is (2R)-O-phospho-3-sulfolactate + H2O = (2R)-3-sulfolactate + phosphate. The protein is Probable 2-phosphosulfolactate phosphatase of Clostridium botulinum (strain Loch Maree / Type A3).